A 406-amino-acid polypeptide reads, in one-letter code: 4-hydroxy-3-methylbut-2-en-1-yl diphosphate synthase (ferredoxin) (406 aa).

[4Fe-4S] cluster-binding residues include cysteine 313, cysteine 316, cysteine 347, and glutamate 354.

It belongs to the IspG family. [4Fe-4S] cluster is required as a cofactor.

It carries out the reaction (2E)-4-hydroxy-3-methylbut-2-enyl diphosphate + 2 oxidized [2Fe-2S]-[ferredoxin] + H2O = 2-C-methyl-D-erythritol 2,4-cyclic diphosphate + 2 reduced [2Fe-2S]-[ferredoxin] + H(+). Its pathway is isoprenoid biosynthesis; isopentenyl diphosphate biosynthesis via DXP pathway; isopentenyl diphosphate from 1-deoxy-D-xylulose 5-phosphate: step 5/6. Functionally, converts 2C-methyl-D-erythritol 2,4-cyclodiphosphate (ME-2,4cPP) into 1-hydroxy-2-methyl-2-(E)-butenyl 4-diphosphate. This is 4-hydroxy-3-methylbut-2-en-1-yl diphosphate synthase (ferredoxin) from Picosynechococcus sp. (strain ATCC 27264 / PCC 7002 / PR-6) (Agmenellum quadruplicatum).